The chain runs to 121 residues: Large ribosomal subunit protein bL17 (121 aa).

This sequence belongs to the bacterial ribosomal protein bL17 family. As to quaternary structure, part of the 50S ribosomal subunit. Contacts protein L32.

This is Large ribosomal subunit protein bL17 from Metamycoplasma arthritidis (strain 158L3-1) (Mycoplasma arthritidis).